The sequence spans 123 residues: Small ribosomal subunit protein uS12 (123 aa).

D89 is modified (3-methylthioaspartic acid).

This sequence belongs to the universal ribosomal protein uS12 family. In terms of assembly, part of the 30S ribosomal subunit. Contacts proteins S8 and S17. May interact with IF1 in the 30S initiation complex.

Functionally, with S4 and S5 plays an important role in translational accuracy. In terms of biological role, interacts with and stabilizes bases of the 16S rRNA that are involved in tRNA selection in the A site and with the mRNA backbone. Located at the interface of the 30S and 50S subunits, it traverses the body of the 30S subunit contacting proteins on the other side and probably holding the rRNA structure together. The combined cluster of proteins S8, S12 and S17 appears to hold together the shoulder and platform of the 30S subunit. The chain is Small ribosomal subunit protein uS12 from Rhizobium leguminosarum bv. trifolii (strain WSM2304).